Here is a 179-residue protein sequence, read N- to C-terminus: Transcriptional repressor NrdR (179 aa).

A zinc finger lies at 3 to 34; the sequence is CPYCQHTNSRVLESRSSEGGQSIRRRRECLCC. One can recognise an ATP-cone domain in the interval 49–139; sequence ITVIKHDGKK…VYGRFQGIKD (91 aa). The tract at residues 160 to 179 is disordered; it reads KPANDDFSEQETPSTVMMPS. A compositionally biased stretch (polar residues) spans 169-179; that stretch reads QETPSTVMMPS.

This sequence belongs to the NrdR family. Requires Zn(2+) as cofactor.

Functionally, negatively regulates transcription of bacterial ribonucleotide reductase nrd genes and operons by binding to NrdR-boxes. In Rippkaea orientalis (strain PCC 8801 / RF-1) (Cyanothece sp. (strain PCC 8801)), this protein is Transcriptional repressor NrdR.